The primary structure comprises 341 residues: Trace amine-associated receptor 13c (341 aa).

The Extracellular segment spans residues 1–34; the sequence is MDLSSQEYDPSQFCFPAVNNSCLKGTHHVSTQTV. N-linked (GlcNAc...) asparagine glycosylation occurs at asparagine 19. 2 disulfide bridges follow: cysteine 22/cysteine 186 and cysteine 105/cysteine 186. Residues 35–55 form a helical membrane-spanning segment; sequence VYLILASAMTVTVLGNSVVII. At 56 to 68 the chain is on the cytoplasmic side; the sequence is SIAHFKQLQTPTN. Residues 69-89 traverse the membrane as a helical segment; the sequence is ILVMSLALADLLLGLVVMPFS. Residues 90 to 105 lie on the Extracellular side of the membrane; it reads MIRSVDGCWYYGETFC. Residues 106 to 126 form a helical membrane-spanning segment; the sequence is LLHTGFDLFLTSVSIFHLIFI. Residues 127-147 are Cytoplasmic-facing; the sequence is AVDRHQAVCFPLQYPTRITIP. A helical membrane pass occupies residues 148–168; the sequence is VAWVMVMISWSMAAFYSYGVV. The Extracellular segment spans residues 169–195; that stretch reads YSKANLEGLEEYIASVYCMGGCTLYFN. Residues 196-219 form a helical membrane-spanning segment; the sequence is ALWSVLDTLLTFFLPCSVMVGLYA. At 220–257 the chain is on the cytoplasmic side; that stretch reads RIFVVAKKHIKSITEANQNENENVFKNPRRSERKAAKT. A helical transmembrane segment spans residues 258–278; sequence LGIVVGAFILCWLPFFINSLV. Topologically, residues 279 to 292 are extracellular; it reads DPYINFSTPYALFD. A glycan (N-linked (GlcNAc...) asparagine) is linked at asparagine 283. A helical transmembrane segment spans residues 293-313; that stretch reads AFGWLGYTNSTLNPIIYGLFY. Topologically, residues 314-341 are cytoplasmic; it reads PWFRKTLSLIVTLRIFEPNSSDINLFTV.

This sequence belongs to the G-protein coupled receptor 1 family. Expressed in olfactory epithelium (at protein level). Detected in a sparse population of olfactory sensory neurons.

Its subcellular location is the cell membrane. Its function is as follows. Olfactory receptor for medium length odd-chained diamines including cadaverine which is generated by bacterial decarboxylation of the basic amino acid lysine and contributes to the odor of decomposing tissue. Mediates pronounced innate aversion behavior to cadaverine. The polypeptide is Trace amine-associated receptor 13c (Danio rerio (Zebrafish)).